We begin with the raw amino-acid sequence, 331 residues long: Ribosomal RNA small subunit methyltransferase C (331 aa).

This sequence belongs to the methyltransferase superfamily. RsmC family. Monomer.

It is found in the cytoplasm. The catalysed reaction is guanosine(1207) in 16S rRNA + S-adenosyl-L-methionine = N(2)-methylguanosine(1207) in 16S rRNA + S-adenosyl-L-homocysteine + H(+). Functionally, specifically methylates the guanine in position 1207 of 16S rRNA in the 30S particle. This is Ribosomal RNA small subunit methyltransferase C from Pseudomonas putida (strain W619).